A 188-amino-acid chain; its full sequence is Putative manganese efflux pump MntP (188 aa).

The next 6 membrane-spanning stretches (helical) occupy residues 3–23 (ITAT…ASIG), 41–61 (LIFG…GMLA), 66–86 (LEWN…RMII), 107–129 (LLVT…LAFL), 143–163 (ATLI…PLLG), and 168–188 (ILGG…HFHG).

This sequence belongs to the MntP (TC 9.B.29) family.

The protein localises to the cell inner membrane. In terms of biological role, probably functions as a manganese efflux pump. This chain is Putative manganese efflux pump MntP, found in Citrobacter koseri (strain ATCC BAA-895 / CDC 4225-83 / SGSC4696).